The following is a 297-amino-acid chain: tRNA pseudouridine synthase A (297 aa).

The active-site Nucleophile is D57. A substrate-binding site is contributed by Y115.

It belongs to the tRNA pseudouridine synthase TruA family. As to quaternary structure, homodimer.

It catalyses the reaction uridine(38/39/40) in tRNA = pseudouridine(38/39/40) in tRNA. Functionally, formation of pseudouridine at positions 38, 39 and 40 in the anticodon stem and loop of transfer RNAs. This chain is tRNA pseudouridine synthase A, found in Nitratidesulfovibrio vulgaris (strain ATCC 29579 / DSM 644 / CCUG 34227 / NCIMB 8303 / VKM B-1760 / Hildenborough) (Desulfovibrio vulgaris).